Here is a 161-residue protein sequence, read N- to C-terminus: Ribosome maturation factor RimP (161 aa).

Belongs to the RimP family.

It localises to the cytoplasm. Its function is as follows. Required for maturation of 30S ribosomal subunits. This chain is Ribosome maturation factor RimP, found in Rickettsia conorii (strain ATCC VR-613 / Malish 7).